The sequence spans 524 residues: Cytochrome P450 monooxygenase alt1 (524 aa).

Residues 24 to 44 (IANMLSVIAFSICISPIVYFL) form a helical membrane-spanning segment. Position 469 (C469) interacts with heme.

This sequence belongs to the cytochrome P450 family. Heme is required as a cofactor.

The protein localises to the membrane. Its pathway is secondary metabolite biosynthesis. Functionally, cytochrome P450 monooxygenase; part of the gene cluster that mediates the biosynthesis of alternapyrone derivatives. Alternapyrone is a decaketide with octa-methylation from methionine on every C2 unit except the third unit. All the domains in the polyketide synthase alt5 are apparently involved in alternapyrone synthesis, that is, the 8 CMeT, 7 KR, 7 DH, and 4 ER reactions in the 9 KS-mediated condensation steps required for alternapyrone synthesis. the alternapyrone produced by alt5 might be intensively modified by cytochrome P450 monooxygenases alt1, alt2 and alt3 and FAD-dependent oxidoreductase alt4 present in the alt gene cluster. In Alternaria solani, this protein is Cytochrome P450 monooxygenase alt1.